Reading from the N-terminus, the 168-residue chain is NAD(P)H-quinone oxidoreductase subunit J, chloroplastic (168 aa).

Belongs to the complex I 30 kDa subunit family. NDH is composed of at least 16 different subunits, 5 of which are encoded in the nucleus.

The protein localises to the plastid. It is found in the chloroplast thylakoid membrane. It catalyses the reaction a plastoquinone + NADH + (n+1) H(+)(in) = a plastoquinol + NAD(+) + n H(+)(out). The enzyme catalyses a plastoquinone + NADPH + (n+1) H(+)(in) = a plastoquinol + NADP(+) + n H(+)(out). In terms of biological role, NDH shuttles electrons from NAD(P)H:plastoquinone, via FMN and iron-sulfur (Fe-S) centers, to quinones in the photosynthetic chain and possibly in a chloroplast respiratory chain. The immediate electron acceptor for the enzyme in this species is believed to be plastoquinone. Couples the redox reaction to proton translocation, and thus conserves the redox energy in a proton gradient. In Chaetosphaeridium globosum (Charophycean green alga), this protein is NAD(P)H-quinone oxidoreductase subunit J, chloroplastic.